The chain runs to 587 residues: APOBEC1 complementation factor (587 aa).

RRM domains are found at residues C56 to D134, C136 to P218, and K231 to P303. The segment at H360–K409 is required for nuclear localization. T491 is modified (phosphothreonine).

Part of the apolipoprotein B mRNA editing complex with APOBEC1. Interacts with TNPO2; TNPO2 may be responsible for transport of A1CF into the nucleus. Interacts with SYNCRIP. Interacts with CELF2/CUGBP2. Interacts with RBM47.

The protein localises to the nucleus. It localises to the endoplasmic reticulum. Its subcellular location is the cytoplasm. Functionally, essential component of the apolipoprotein B mRNA editing enzyme complex which is responsible for the postranscriptional editing of a CAA codon for Gln to a UAA codon for stop in APOB mRNA. Binds to APOB mRNA and is probably responsible for docking the catalytic subunit, APOBEC1, to the mRNA to allow it to deaminate its target cytosine. The complex also seems to protect the edited APOB mRNA from nonsense-mediated decay. This is APOBEC1 complementation factor (A1CF) from Pongo abelii (Sumatran orangutan).